The primary structure comprises 235 residues: Peptidase E (235 aa).

Catalysis depends on charge relay system residues serine 122, aspartate 137, and histidine 159.

It belongs to the peptidase S51 family.

It localises to the cytoplasm. It carries out the reaction Dipeptidase E catalyzes the hydrolysis of dipeptides Asp-|-Xaa. It does not act on peptides with N-terminal Glu, Asn or Gln, nor does it cleave isoaspartyl peptides.. Hydrolyzes dipeptides containing N-terminal aspartate residues. May play a role in allowing the cell to use peptide aspartate to spare carbon otherwise required for the synthesis of the aspartate family of amino acids. The polypeptide is Peptidase E (Shewanella denitrificans (strain OS217 / ATCC BAA-1090 / DSM 15013)).